A 369-amino-acid polypeptide reads, in one-letter code: Serine/threonine-protein acetyltransferase HopZ1a (369 aa).

The disordered stretch occupies residues 1-46 (MGNVCVGGSRMSHQVYSPDRADTPPRSERNTPDRRQRAAGDAERTQ). Basic and acidic residues predominate over residues 19-46 (DRADTPPRSERNTPDRRQRAAGDAERTQ). 1D-myo-inositol hexakisphosphate is bound by residues Arg-49, Lys-53, and Arg-106. Active-site residues include His-150 and Glu-170. His-150 provides a ligand contact to CoA. CoA-binding positions include Ala-177 and 211–212 (KT). The active site involves Cys-216. 1D-myo-inositol hexakisphosphate contacts are provided by residues Asn-222, 226-229 (KAHK), and 289-290 (KH). Position 289 is an N6-acetyllysine; by autocatalysis (Lys-289). 292 to 295 (ASLT) lines the CoA pocket. 1D-myo-inositol hexakisphosphate is bound by residues 314 to 317 (SEGH) and Arg-326. Residues 331–334 (RVKR) and 344–348 (SNTQF) each bind CoA. Residues Gln-358 and Arg-362 each contribute to the 1D-myo-inositol hexakisphosphate site.

The protein belongs to the acetyltransferase YopJ family. As to quaternary structure, interacts with host plant JAZ proteins (e.g. Glycine max JAZ1 and Arabidospis thaliana TIFY10B/JAZ2, TIFY11A/JAZ5, TIFY11B/JAZ6, TIFY5A/JAZ8 and TIFY3B/JAZ12) and triggers their degradation. Binds directly to SZE1 and SZE2 at the host plasma membrane; this interaction with a complex made of, at least, SZE1, BKN2/SZE2, ZAR1 and ZED1 triggers host immunity. The cofactor is 1D-myo-inositol hexakisphosphate. In terms of processing, autoacetylated at Lys-289; while autoacetylation at Lys-289 is required for virulence function to some extent, it is not essential.

It is found in the secreted. The protein localises to the host cell membrane. It localises to the host cytoplasm. Its subcellular location is the host cytoskeleton. The protein resides in the host nucleus. The catalysed reaction is L-threonyl-[protein] + acetyl-CoA = O-acetyl-L-threonyl-[protein] + CoA. The enzyme catalyses L-seryl-[protein] + acetyl-CoA = O-acetyl-L-seryl-[protein] + CoA. It carries out the reaction L-lysyl-[protein] + acetyl-CoA = N(6)-acetyl-L-lysyl-[protein] + CoA + H(+). With respect to regulation, 1D-myo-inositol hexakisphosphate activates protein-acetyltransferase activity via an allosteric mechanism: 1D-myo-inositol hexakisphosphate-binding induces a conformational rearrangement that stimulates the interaction with acetyl-CoA. Acetyltransferase activity is activated by phytic acid. Functionally, serine/threonine-protein acetyltransferase translocated into infected cells, which impairs host microtubule network and host immunity by mediating acetylation of target proteins. Blocks secretion in host cells by mediating acetylation of host tubulin, thereby impairing host microbubule network. Impairs host cell immunity by mediating acetylation of host TIFY/JAZ transcription repressors (Arabidopsis thaliana TIFY10B/JAZ2, TIFY11A/JAZ5, TIFY11B/JAZ6, TIFY5A/JAZ8, TIFY9/JAZ10 and TIFY3B/JAZ12), thereby activating host jasmonate signaling. The polypeptide is Serine/threonine-protein acetyltransferase HopZ1a (Pseudomonas syringae pv. syringae).